A 214-amino-acid polypeptide reads, in one-letter code: MITASLLPLPATSSSSGRRSLPPPTTTFPRPPPPLRRHRHLSSSSSSASSTESDGGGGSTNGSLPGLPPVVVEEEEEEFCPVECVTEFKTEEELARVLERAKATGALVVVDFFRPSCGSCKYIEQGFMKLCKGSGDHGSSVVFLKHNVIDEYDEQSEVADRLRIKVVPLFHFYKNGVLLEAFATRDKERIIAAIQKYTAPSSPPAESEEPSQEG.

Residues 1-20 (MITASLLPLPATSSSSGRRS) are compositionally biased toward low complexity. A disordered region spans residues 1 to 68 (MITASLLPLP…STNGSLPGLP (68 aa)). The transit peptide at 1 to 71 (MITASLLPLP…GSLPGLPPVV (71 aa)) directs the protein to the chloroplast. The segment covering 21-34 (LPPPTTTFPRPPPP) has biased composition (pro residues). Over residues 42-53 (SSSSSSASSTES) the composition is skewed to low complexity. A Thioredoxin domain is found at 72-199 (VEEEEEEFCP…IIAAIQKYTA (128 aa)). Residues C117 and C120 each act as nucleophile in the active site. A disulfide bond links C117 and C120.

It belongs to the thioredoxin family.

It localises to the plastid. Its subcellular location is the chloroplast. Probable thiol-disulfide oxidoreductase that may participate in various redox reactions. The sequence is that of Thioredoxin-like 4, chloroplastic from Oryza sativa subsp. japonica (Rice).